The primary structure comprises 245 residues: Acetoacetate decarboxylase (245 aa).

The active-site Schiff-base intermediate with acetoacetate is the Lys116.

This sequence belongs to the ADC family.

It carries out the reaction acetoacetate + H(+) = acetone + CO2. Functionally, catalyzes the conversion of acetoacetate to acetone and carbon dioxide. This Acidiphilium cryptum (strain JF-5) protein is Acetoacetate decarboxylase.